The sequence spans 279 residues: Energy-coupling factor transporter ATP-binding protein EcfA1 (279 aa).

One can recognise an ABC transporter domain in the interval 6 to 240 (VRLEHVFYKY…ADAMREIGLG (235 aa)). Residue 40-47 (GHNGSGKS) participates in ATP binding.

The protein belongs to the ABC transporter superfamily. Energy-coupling factor EcfA family. In terms of assembly, forms a stable energy-coupling factor (ECF) transporter complex composed of 2 membrane-embedded substrate-binding proteins (S component), 2 ATP-binding proteins (A component) and 2 transmembrane proteins (T component).

Its subcellular location is the cell membrane. Functionally, ATP-binding (A) component of a common energy-coupling factor (ECF) ABC-transporter complex. Unlike classic ABC transporters this ECF transporter provides the energy necessary to transport a number of different substrates. This is Energy-coupling factor transporter ATP-binding protein EcfA1 from Listeria monocytogenes serovar 1/2a (strain ATCC BAA-679 / EGD-e).